The chain runs to 1531 residues: Multidrug resistance-associated protein 1 (1531 aa).

The Extracellular portion of the chain corresponds to 1-33; the sequence is MALRGFCSADGSDPLWDWNVTWNTSNPDFTKCF. Residues N19 and N23 are each glycosylated (N-linked (GlcNAc...) asparagine). Residues 34–54 form a helical membrane-spanning segment; it reads QNTVLVWVPCFYLWACFPFYF. Over 55 to 74 the chain is Cytoplasmic; that stretch reads LYLSRHDRGYIQMTPLNKTK. The helical transmembrane segment at 75 to 95 threads the bilayer; it reads TALGFLLWIVCWADLFYSFWE. At 96 to 100 the chain is on the extracellular side; it reads RSRGI. Residues 101-121 traverse the membrane as a helical segment; that stretch reads FLAPVFLVSPTLLGITMLLAT. Residues 122 to 133 lie on the Cytoplasmic side of the membrane; that stretch reads FLIQLERRKGVQ. The chain crosses the membrane as a helical span at residues 134-154; that stretch reads SSGIMLTFWLVALVCALAILR. Residues 155 to 172 lie on the Extracellular side of the membrane; sequence SKIMTALKEDAQVDLFRD. A helical membrane pass occupies residues 173–193; it reads ITFYVYFSLLLIQLVLSCFSD. Topologically, residues 194–316 are cytoplasmic; the sequence is RSPLFSETIH…KEWNPSLFKV (123 aa). The residue at position 277 (Y277) is a Phosphotyrosine. S289 bears the Phosphoserine mark. Residues 317 to 337 form a helical membrane-spanning segment; that stretch reads LYKTFGPYFLMSFFFKAIHDL. The 284-residue stretch at 325-608 folds into the ABC transmembrane type-1 1 domain; that stretch reads FLMSFFFKAI…LPMVISSIVQ (284 aa). Residues 338-363 are Extracellular-facing; it reads MMFSGPQILKLLIKFVNDTKAPDWQG. The chain crosses the membrane as a helical span at residues 364–384; sequence YFYTVLLFVTACLQTLVLHQY. Residues 385–440 are Cytoplasmic-facing; it reads FHICFVSGMRIKTAVIGAVYRKALVITNSARKSSTVGEIVNLMSVDAQRFMDLATY. The chain crosses the membrane as a helical span at residues 441 to 461; that stretch reads INMIWSAPLQVILALYLLWLN. Topologically, residues 462–464 are extracellular; the sequence is LGP. A helical transmembrane segment spans residues 465–485; that stretch reads SVLAGVAVMVLMVPVNAVMAM. Over 486-547 the chain is Cytoplasmic; that stretch reads KTKTYQVAHM…VLKKSAYLSA (62 aa). At K503 the chain carries N6-succinyllysine. The chain crosses the membrane as a helical span at residues 548–568; that stretch reads VGTFTWVCTPFLVALCTFAVY. Residues 569-590 lie on the Extracellular side of the membrane; it reads VTIDENNILDAQTAFVSLALFN. The chain crosses the membrane as a helical span at residues 591–611; sequence ILRFPLNILPMVISSIVQASV. Residues 612–967 lie on the Cytoplasmic side of the membrane; that stretch reads SLKRLRIFLS…VKLSVYWDYM (356 aa). One can recognise an ABC transporter 1 domain in the interval 644 to 868; sequence ITVRNATFTW…DGAFAEFLRT (225 aa). Residues W653, 678–685, and Q713 contribute to the ATP site; that span reads GQVGCGKS. Residues S905, S915, and S930 each carry the phosphoserine modification. A helical transmembrane segment spans residues 968–988; that stretch reads KAIGLFISFLSIFLFMCNHVS. In terms of domain architecture, ABC transmembrane type-1 2 spans 975–1256; sequence SFLSIFLFMC…LVRMSSEMET (282 aa). The Extracellular segment spans residues 989–1025; the sequence is ALASNYWLSLWTDDPIVNGTQEHTKVRLSVYGALGIS. N1006 carries N-linked (GlcNAc...) asparagine glycosylation. The chain crosses the membrane as a helical span at residues 1026–1046; sequence QGIAVFGYSMAVSIGGILASR. The Cytoplasmic portion of the chain corresponds to 1047–1089; it reads CLHVDLLHSILRSPMSFFERTPSGNLVNRFSKELDTVDSMIPE. Residues 1090-1110 traverse the membrane as a helical segment; it reads VIKMFMGSLFNVIGACIVILL. Residue A1111 is a topological domain, extracellular. Residues 1112–1132 traverse the membrane as a helical segment; sequence TPIAAIIIPPLGLIYFFVQRF. The Cytoplasmic segment spans residues 1133–1203; sequence YVASSRQLKR…VANRWLAVRL (71 aa). A helical transmembrane segment spans residues 1204-1224; it reads ECVGNCIVLFAALFAVISRHS. The Extracellular portion of the chain corresponds to 1225–1226; that stretch reads LS. Residues 1227–1247 traverse the membrane as a helical segment; sequence AGLVGLSVSYSLQVTTYLNWL. The Cytoplasmic portion of the chain corresponds to 1248-1531; sequence VRMSSEMETN…YSMAKDAGLV (284 aa). Residues 1293–1527 form the ABC transporter 2 domain; sequence VEFRNYCLRY…RGLFYSMAKD (235 aa). 1327 to 1334 contributes to the ATP binding site; sequence GRTGAGKS.

This sequence belongs to the ABC transporter superfamily. ABCC family. Conjugate transporter (TC 3.A.1.208) subfamily. In terms of assembly, (Microbial infection) Interacts with human cytomegalovirus protein UL138; this interaction mediates MRP1 degradation via the lysosome. As to expression, lung, testis and peripheral blood mononuclear cells.

It localises to the cell membrane. The protein resides in the basolateral cell membrane. It carries out the reaction ATP + H2O + xenobioticSide 1 = ADP + phosphate + xenobioticSide 2.. It catalyses the reaction an S-substituted glutathione(in) + ATP + H2O = an S-substituted glutathione(out) + ADP + phosphate + H(+). The catalysed reaction is sphing-4-enine 1-phosphate(in) + ATP + H2O = sphing-4-enine 1-phosphate(out) + ADP + phosphate + H(+). The enzyme catalyses leukotriene C4(in) + ATP + H2O = leukotriene C4(out) + ADP + phosphate + H(+). It carries out the reaction 17beta-estradiol 17-O-(beta-D-glucuronate)(in) + ATP + H2O = 17beta-estradiol 17-O-(beta-D-glucuronate)(out) + ADP + phosphate + H(+). It catalyses the reaction daunorubicin(in) + ATP + H2O = daunorubicin(out) + ADP + phosphate + H(+). The catalysed reaction is vincristine(in) + ATP + H2O = vincristine(out) + ADP + phosphate + H(+). The enzyme catalyses 2',3'-cGAMP(in) + ATP + H2O = 2',3'-cGAMP(out) + ADP + phosphate + H(+). It carries out the reaction S-[(2E,6E,10E)-geranylgeranyl]-L-glutathione(in) + ATP + H2O = S-[(2E,6E,10E)-geranylgeranyl]-L-glutathione(out) + ADP + phosphate + H(+). It catalyses the reaction prostaglandin A2-S-(R)-glutathione(in) + ATP + H2O = prostaglandin A2-S-(R)-glutathione(out) + ADP + phosphate + H(+). The catalysed reaction is prostaglandin A2-S-(S)-glutathione(in) + ATP + H2O = prostaglandin A2-S-(S)-glutathione(out) + ADP + phosphate + H(+). MK 571 inhibits sphingosine 1-phosphate and leukotriene C4 export. In terms of biological role, mediates export of organic anions and drugs from the cytoplasm. Mediates ATP-dependent transport of glutathione and glutathione conjugates, leukotriene C4, estradiol-17-beta-o-glucuronide, methotrexate, antiviral drugs and other xenobiotics. Confers resistance to anticancer drugs by decreasing accumulation of drug in cells, and by mediating ATP- and GSH-dependent drug export. Hydrolyzes ATP with low efficiency. Catalyzes the export of sphingosine 1-phosphate from mast cells independently of their degranulation. Participates in inflammatory response by allowing export of leukotriene C4 from leukotriene C4-synthesizing cells. Mediates ATP-dependent, GSH-independent cyclic GMP-AMP (cGAMP) export. Thus, by limiting intracellular cGAMP concentrations negatively regulates the cGAS-STING pathway. Exports S-geranylgeranyl-glutathione (GGG) in lymphoid cells and stromal compartments of lymphoid organs. ABCC1 (via extracellular transport) with GGT5 (via GGG catabolism) establish GGG gradients within lymphoid tissues to position P2RY8-positive lymphocytes at germinal centers in lymphoid follicles and restrict their chemotactic transmigration from blood vessels to the bone marrow parenchyma. Mediates basolateral export of GSH-conjugated R- and S-prostaglandin A2 diastereomers in polarized epithelial cells. This chain is Multidrug resistance-associated protein 1, found in Homo sapiens (Human).